The following is a 203-amino-acid chain: Orotate phosphoribosyltransferase (203 aa).

5-phospho-alpha-D-ribose 1-diphosphate-binding positions include arginine 94, lysine 98, histidine 100, and glutamate 120–serine 128. Serine 124 contacts orotate.

It belongs to the purine/pyrimidine phosphoribosyltransferase family. PyrE subfamily. In terms of assembly, homodimer. Requires Mg(2+) as cofactor.

It carries out the reaction orotidine 5'-phosphate + diphosphate = orotate + 5-phospho-alpha-D-ribose 1-diphosphate. It functions in the pathway pyrimidine metabolism; UMP biosynthesis via de novo pathway; UMP from orotate: step 1/2. Catalyzes the transfer of a ribosyl phosphate group from 5-phosphoribose 1-diphosphate to orotate, leading to the formation of orotidine monophosphate (OMP). The protein is Orotate phosphoribosyltransferase of Staphylococcus aureus (strain MSSA476).